Reading from the N-terminus, the 362-residue chain is Nicotinate-nucleotide--dimethylbenzimidazole phosphoribosyltransferase (362 aa).

The Proton acceptor role is filled by Glu-321.

The protein belongs to the CobT family.

The enzyme catalyses 5,6-dimethylbenzimidazole + nicotinate beta-D-ribonucleotide = alpha-ribazole 5'-phosphate + nicotinate + H(+). The protein operates within nucleoside biosynthesis; alpha-ribazole biosynthesis; alpha-ribazole from 5,6-dimethylbenzimidazole: step 1/2. Catalyzes the synthesis of alpha-ribazole-5'-phosphate from nicotinate mononucleotide (NAMN) and 5,6-dimethylbenzimidazole (DMB). In Clostridium tetani (strain Massachusetts / E88), this protein is Nicotinate-nucleotide--dimethylbenzimidazole phosphoribosyltransferase.